Reading from the N-terminus, the 654-residue chain is Pyoverdine export ATP-binding/permease protein PvdT (654 aa).

Residues 6 to 245 form the ABC transporter domain; sequence IELCDIRKAY…QPEQLQANDL (240 aa). Residue 43 to 50 coordinates ATP; that stretch reads GASGSGKS. The next 4 membrane-spanning stretches (helical) occupy residues 282–302, 529–549, 596–616, and 617–637; these read ALTL…LAVG, LSLM…IGVM, IVIA…VAFA, and LPAI…FGFM.

It belongs to the ABC transporter superfamily. Macrolide exporter (TC 3.A.1.122) family. In terms of assembly, part of the tripartite efflux system PvdRT-OpmQ, which is composed of an inner membrane component with both ATPase and permease domains, PvdT, a periplasmic membrane fusion protein, PvdR, and an outer membrane component, OpmQ.

Its subcellular location is the cell inner membrane. Functionally, part of the tripartite efflux system PvdRT-OpmQ required for the secretion into the extracellular milieu of the siderophore pyoverdine (PVD), which is involved in iron acquisition. This subunit binds PVD and drives its secretion by hydrolyzing ATP. The system is responsible for export of newly synthesized PVD after the final steps of biosynthesis have taken place in the periplasm. It is also responsible for recycling of PVD after internalization of ferri-PVD into the periplasm by the outer-membrane receptor FpvA and release of iron from PVD, thus making PVD available for new cycles of iron uptake. The polypeptide is Pyoverdine export ATP-binding/permease protein PvdT (Pseudomonas entomophila (strain L48)).